The sequence spans 184 residues: uncharacterized protein (184 aa).

This is an uncharacterized protein from Caenorhabditis elegans.